The primary structure comprises 120 residues: Dihydroneopterin aldolase (120 aa).

Residues Glu20 and Met114 each coordinate substrate.

Belongs to the archaeal dihydroneopterin aldolase family. Homotetramer.

It carries out the reaction 7,8-dihydroneopterin = 6-hydroxymethyl-7,8-dihydropterin + glycolaldehyde. In terms of biological role, catalyzes the conversion of 7,8-dihydroneopterin (H2Neo) to 6-hydroxymethyl-7,8-dihydropterin (6-HMD). This is Dihydroneopterin aldolase from Picrophilus torridus (strain ATCC 700027 / DSM 9790 / JCM 10055 / NBRC 100828 / KAW 2/3).